Reading from the N-terminus, the 229-residue chain is UPF0758 protein CLL_A0562 (229 aa).

Residues K107 to I229 form the MPN domain. Positions 178, 180, and 191 each coordinate Zn(2+). Positions H178–D191 match the JAMM motif motif.

Belongs to the UPF0758 family.

The chain is UPF0758 protein CLL_A0562 from Clostridium botulinum (strain Eklund 17B / Type B).